Here is a 317-residue protein sequence, read N- to C-terminus: Aspartate carbamoyltransferase catalytic subunit (317 aa).

Residues Arg65 and Thr66 each contribute to the carbamoyl phosphate site. An L-aspartate-binding site is contributed by Lys93. Arg115, His145, and Gln148 together coordinate carbamoyl phosphate. Arg178 and Arg233 together coordinate L-aspartate. Gly274 and Pro275 together coordinate carbamoyl phosphate.

It belongs to the aspartate/ornithine carbamoyltransferase superfamily. ATCase family. In terms of assembly, heterododecamer (2C3:3R2) of six catalytic PyrB chains organized as two trimers (C3), and six regulatory PyrI chains organized as three dimers (R2).

The catalysed reaction is carbamoyl phosphate + L-aspartate = N-carbamoyl-L-aspartate + phosphate + H(+). It functions in the pathway pyrimidine metabolism; UMP biosynthesis via de novo pathway; (S)-dihydroorotate from bicarbonate: step 2/3. Functionally, catalyzes the condensation of carbamoyl phosphate and aspartate to form carbamoyl aspartate and inorganic phosphate, the committed step in the de novo pyrimidine nucleotide biosynthesis pathway. The sequence is that of Aspartate carbamoyltransferase catalytic subunit from Bordetella parapertussis (strain 12822 / ATCC BAA-587 / NCTC 13253).